A 205-amino-acid polypeptide reads, in one-letter code: Histidine biosynthesis bifunctional protein HisIE (205 aa).

The phosphoribosyl-AMP cyclohydrolase stretch occupies residues 1 to 116 (MLKLKFNEEG…KVEKPLPFEV (116 aa)). Positions 117–205 (LPRLQDVIRE…VMEELIRRFK (89 aa)) are phosphoribosyl-ATP pyrophosphohydrolase.

This sequence in the N-terminal section; belongs to the PRA-CH family. The protein in the C-terminal section; belongs to the PRA-PH family.

It localises to the cytoplasm. It catalyses the reaction 1-(5-phospho-beta-D-ribosyl)-ATP + H2O = 1-(5-phospho-beta-D-ribosyl)-5'-AMP + diphosphate + H(+). It carries out the reaction 1-(5-phospho-beta-D-ribosyl)-5'-AMP + H2O = 1-(5-phospho-beta-D-ribosyl)-5-[(5-phospho-beta-D-ribosylamino)methylideneamino]imidazole-4-carboxamide. Its pathway is amino-acid biosynthesis; L-histidine biosynthesis; L-histidine from 5-phospho-alpha-D-ribose 1-diphosphate: step 2/9. It participates in amino-acid biosynthesis; L-histidine biosynthesis; L-histidine from 5-phospho-alpha-D-ribose 1-diphosphate: step 3/9. The polypeptide is Histidine biosynthesis bifunctional protein HisIE (hisI) (Aquifex aeolicus (strain VF5)).